Reading from the N-terminus, the 373-residue chain is Structure-specific endonuclease subunit EME2 (373 aa).

Residues 24-52 (RPQTWEISDSDGEGVPAREVGTQAPSPAG) form a disordered region. The interval 47–260 (APSPAGERRA…LPSKQHRDSQ (214 aa)) is nuclease-like domain; forms the post-nick DNA binding interface and is involved in DNA recognition and bending. The tract at residues 282–373 (GLRGVWWRQI…NPDLLLDLSS (92 aa)) is helix-hairpin-helix (2HhH); forms the pre-nick DNA binding interface and is involved in DNA recognition and bending.

It belongs to the EME1/MMS4 family. As to quaternary structure, part of the heterodimeric MUS81-EME2 complex; the complex forms specifically during the DNA replication phase of the cell cycle.

The protein localises to the nucleus. Functionally, non-catalytic subunit of the structure-specific, heterodimeric DNA endonuclease MUS81-EME2 which is involved in the maintenance of genome stability. In the complex, EME2 is required for DNA cleavage, participating in DNA recognition and bending. MUS81-EME2 cleaves 3'-flaps and nicked Holliday junctions, and exhibit limited endonuclease activity with 5' flaps and nicked double-stranded DNAs. MUS81-EME2 which is active during the replication of DNA is more specifically involved in replication fork processing. Replication forks frequently encounter obstacles to their passage, including DNA base lesions, DNA interstrand cross-links, difficult-to-replicate sequences, transcription bubbles, or tightly bound proteins. One mechanism for the restart of a stalled replication fork involves nucleolytic cleavage mediated by the MUS81-EME2 endonuclease. By acting upon the stalled fork, MUS81-EME2 generates a DNA double-strand break (DSB) that can be repaired by homologous recombination, leading to the restoration of an active fork. MUS81-EME2 could also function in telomere maintenance. The chain is Structure-specific endonuclease subunit EME2 from Mus musculus (Mouse).